The following is a 228-amino-acid chain: Cytochrome b6-f complex iron-sulfur subunit 1, chloroplastic (228 aa).

Residues 1–49 constitute a chloroplast transit peptide; that stretch reads MASSTLSPVTQLCSSKSGLSSVSQCLLVKPMKINSHGLGKDKRMKVKCM. A helical membrane pass occupies residues 72 to 92; it reads LLGALSLPTAGMLVPYGTFFV. Residues 115–211 enclose the Rieske domain; it reads ASEWLKTHPP…ADIDDGKVVF (97 aa). [2Fe-2S] cluster contacts are provided by C157, H159, C175, and H178. C162 and C177 form a disulfide bridge.

This sequence belongs to the Rieske iron-sulfur protein family. The 4 large subunits of the cytochrome b6-f complex are cytochrome b6, subunit IV (17 kDa polypeptide, petD), cytochrome f and the Rieske protein, while the 4 small subunits are petG, petL, petM and petN. The complex functions as a dimer. Requires [2Fe-2S] cluster as cofactor.

Its subcellular location is the plastid. The protein localises to the chloroplast thylakoid membrane. The enzyme catalyses 2 oxidized [plastocyanin] + a plastoquinol + 2 H(+)(in) = 2 reduced [plastocyanin] + a plastoquinone + 4 H(+)(out). In terms of biological role, component of the cytochrome b6-f complex, which mediates electron transfer between photosystem II (PSII) and photosystem I (PSI), cyclic electron flow around PSI, and state transitions. In Nicotiana tabacum (Common tobacco), this protein is Cytochrome b6-f complex iron-sulfur subunit 1, chloroplastic (petC1).